The primary structure comprises 461 residues: Glyceraldehyde-3-phosphate dehydrogenase-like protein (461 aa).

T421 bears the Phosphothreonine mark.

The protein belongs to the glyceraldehyde-3-phosphate dehydrogenase family.

The protein is Glyceraldehyde-3-phosphate dehydrogenase-like protein (gap2) of Pseudomonas aeruginosa (strain UCBPP-PA14).